We begin with the raw amino-acid sequence, 105 residues long: N(2)-fixation sustaining protein CowN (105 aa).

This sequence belongs to the CowN family.

Functionally, is required to sustain N(2)-dependent growth in the presence of low levels of carbon monoxide (CO). Probably acts by protecting the N(2) fixation ability of the nitrogenase complex, which is inactivated in the presence of CO. The chain is N(2)-fixation sustaining protein CowN from Tolumonas auensis (strain DSM 9187 / NBRC 110442 / TA 4).